The sequence spans 104 residues: L-rhamnose mutarotase (104 aa).

Substrate is bound at residue Y18. H22 acts as the Proton donor in catalysis. Residues Y41 and 76-77 (WW) each bind substrate.

Belongs to the rhamnose mutarotase family. As to quaternary structure, homodimer.

The protein localises to the cytoplasm. It carries out the reaction alpha-L-rhamnose = beta-L-rhamnose. Its pathway is carbohydrate metabolism; L-rhamnose metabolism. In terms of biological role, involved in the anomeric conversion of L-rhamnose. The chain is L-rhamnose mutarotase from Klebsiella pneumoniae (strain 342).